The following is a 277-amino-acid chain: Thymidylate synthase (277 aa).

Arg-21 serves as a coordination point for dUMP. His-51 is a binding site for (6R)-5,10-methylene-5,6,7,8-tetrahydrofolate. 126 to 127 (RR) provides a ligand contact to dUMP. Residue Cys-159 is the Nucleophile of the active site. Residues 179–182 (RSAD), Asn-190, and 220–222 (HLY) each bind dUMP. Asp-182 contributes to the (6R)-5,10-methylene-5,6,7,8-tetrahydrofolate binding site. Residue Ala-276 coordinates (6R)-5,10-methylene-5,6,7,8-tetrahydrofolate.

The protein belongs to the thymidylate synthase family. Bacterial-type ThyA subfamily. Homodimer.

Its subcellular location is the cytoplasm. It catalyses the reaction dUMP + (6R)-5,10-methylene-5,6,7,8-tetrahydrofolate = 7,8-dihydrofolate + dTMP. Its pathway is pyrimidine metabolism; dTTP biosynthesis. Catalyzes the reductive methylation of 2'-deoxyuridine-5'-monophosphate (dUMP) to 2'-deoxythymidine-5'-monophosphate (dTMP) while utilizing 5,10-methylenetetrahydrofolate (mTHF) as the methyl donor and reductant in the reaction, yielding dihydrofolate (DHF) as a by-product. This enzymatic reaction provides an intracellular de novo source of dTMP, an essential precursor for DNA biosynthesis. This Thioalkalivibrio sulfidiphilus (strain HL-EbGR7) protein is Thymidylate synthase.